The following is a 445-amino-acid chain: Asparagine--tRNA ligase (445 aa).

It belongs to the class-II aminoacyl-tRNA synthetase family. As to quaternary structure, homodimer.

It localises to the cytoplasm. The enzyme catalyses tRNA(Asn) + L-asparagine + ATP = L-asparaginyl-tRNA(Asn) + AMP + diphosphate + H(+). This is Asparagine--tRNA ligase from Deinococcus deserti (strain DSM 17065 / CIP 109153 / LMG 22923 / VCD115).